Here is a 1257-residue protein sequence, read N- to C-terminus: Liprin-alpha-2 (1257 aa).

Disordered regions lie at residues 1 to 29, 231 to 265, and 438 to 463; these read MMCE…DSDS, ASSE…DSTD, and EGQL…EHNK. The segment covering 16-26 has biased composition (low complexity); sequence SQRGSQSSGSD. Coiled coils occupy residues 29–154, 185–541, and 643–695; these read SHFE…SLRM, KALD…SLIE, and HSDA…GLNL. A Phosphoserine modification is found at Ser236. Thr237 carries the phosphothreonine modification. Residues 238 to 256 are compositionally biased toward basic and acidic residues; the sequence is ESEHLEGMEPGQKVHEKRL. The residue at position 239 (Ser239) is a Phosphoserine. 2 positions are modified to phosphoserine: Ser687 and Ser689. Composition is skewed to low complexity over residues 709–725 and 798–813; these read TASS…HSTP and SSLS…GLGS. Disordered stretches follow at residues 709-738 and 790-834; these read TASS…EMDR and SSYH…KSSI. A phosphoserine mark is found at Ser817 and Ser820. SAM domains are found at residues 898-964, 1020-1084, and 1108-1177; these read WDGP…MVSL, NHEW…LKRL, and WSND…LLAL. Residues 1081–1107 adopt a coiled-coil conformation; it reads LKRLNYDRKELERRREASQHEIKDVLV.

Belongs to the liprin family. Liprin-alpha subfamily. In terms of assembly, forms homodimers and heterodimers with liprins-alpha and liprins-beta. Interacts with the second PTPase domain of PTPRD, PTPRF and PTPRS. Interacts with KIF1A; the interaction decreases in presence of calcium. In terms of tissue distribution, expressed only in brain.

The protein resides in the cytoplasm. It localises to the cell surface. Its subcellular location is the cell projection. The protein localises to the dendritic spine. In terms of biological role, alters PTPRF cellular localization and induces PTPRF clustering. May regulate the disassembly of focal adhesions. May localize receptor-like tyrosine phosphatases type 2A at specific sites on the plasma membrane, possibly regulating their interaction with the extracellular environment and their association with substrates. In neuronal cells, is a scaffolding protein in the dendritic spines which acts as immobile postsynaptic post able to recruit KIF1A-driven dense core vesicles to dendritic spines. The protein is Liprin-alpha-2 (PPFIA2) of Homo sapiens (Human).